Reading from the N-terminus, the 170-residue chain is Photosystem II extrinsic protein V (170 aa).

The N-terminal stretch at 1–34 (MNKILGIDPLKKFIFGISAFVLLFWQLNVGAANA) is a signal peptide. C70, C73, H74, and H125 together coordinate heme c.

It belongs to the cytochrome c family. PsbV subfamily. In terms of assembly, PSII is composed of 1 copy each of membrane proteins PsbA, PsbB, PsbC, PsbD, PsbE, PsbF, PsbH, PsbI, PsbJ, PsbK, PsbL, PsbM, PsbT, PsbX, PsbY, PsbZ, Psb30/Ycf12, peripheral proteins PsbO, CyanoQ (PsbQ), PsbU, PsbV and a large number of cofactors. It forms dimeric complexes. It depends on heme c as a cofactor.

Its subcellular location is the cellular thylakoid membrane. Its function is as follows. One of the extrinsic, lumenal subunits of photosystem II (PSII). PSII is a light-driven water plastoquinone oxidoreductase, using light energy to abstract electrons from H(2)O, generating a proton gradient subsequently used for ATP formation. The extrinsic proteins stabilize the structure of photosystem II oxygen-evolving complex (OEC), the ion environment of oxygen evolution and protect the OEC against heat-induced inactivation. Low-potential cytochrome c that plays a role in the OEC of PSII. This Picosynechococcus sp. (strain ATCC 27264 / PCC 7002 / PR-6) (Agmenellum quadruplicatum) protein is Photosystem II extrinsic protein V.